Reading from the N-terminus, the 293-residue chain is Group 3 late-embryogenesis abundant protein, mitochondrial (293 aa).

Residues 1–31 (MFLARNAGRAGYRGVVAYQQAASFSVSSAKA) constitute a mitochondrion transit peptide. Residues 27–43 (SSAKAAGSRSSGGSDAG) are compositionally biased toward low complexity. The tract at residues 27-52 (SSAKAAGSRSSGGSDAGDYAREAAEH) is disordered. 9 LEA 11-mer repeat repeats span residues 58–68 (KDLKNEASWKA), 83–93 (KDTVKEGVHDM), 123–133 (KNAAQDTAATL), 134–144 (KDKAGSAWNQA), 145–155 (KHVVEDKGEDV), 160–170 (KDTASKVWGKA), 171–181 (KHVAEDVKENA), 199–209 (KDKAADVLSGA), and 210–220 (KHTAENLAHKA). Residues 217–293 (AHKAQAAIHD…KGPGQAGGRR (77 aa)) form a disordered region. Low complexity predominate over residues 230 to 265 (SSGSQSQSQSQSQYRQGQQQGRQDQQQSKSQWGQTS). The span at 279–293 (GPQGGKGPGQAGGRR) shows a compositional bias: gly residues.

It belongs to the LEA type 4 family.

Its subcellular location is the mitochondrion. Its function is as follows. Mitochondrial heat soluble protein acting as a molecular shield in water-deficient condition. This is Group 3 late-embryogenesis abundant protein, mitochondrial from Ramazzottius varieornatus (Water bear).